The primary structure comprises 215 residues: Phosphoserine phosphatase (215 aa).

Asp-11 (nucleophile) is an active-site residue. Asp-11 and Asp-13 together coordinate Mg(2+). The active-site Proton donor is Asp-13. Residues Glu-20, Arg-56, 99 to 100 (SG), and Lys-144 contribute to the substrate site. Asp-167 is a Mg(2+) binding site. Substrate is bound at residue Asn-170.

Belongs to the HAD-like hydrolase superfamily. SerB family. The cofactor is Mg(2+).

It carries out the reaction O-phospho-L-serine + H2O = L-serine + phosphate. The enzyme catalyses O-phospho-D-serine + H2O = D-serine + phosphate. It functions in the pathway amino-acid biosynthesis; L-serine biosynthesis; L-serine from 3-phospho-D-glycerate: step 3/3. The chain is Phosphoserine phosphatase from Streptococcus thermophilus (strain ATCC BAA-250 / LMG 18311).